We begin with the raw amino-acid sequence, 331 residues long: MNLKNRHFLKLLDFTPEEITAYLDLAAELKDAKKAGREIQRMKGKNIALIFEKTSTRTRCAFEVAARDQGADRTYLEPSASQIGHKESIKDTARVLGRMYDAIEYRGFAQETVEELAKYAGVPVFNGLTNEFHPTQMLADALTMREHSGKPLNQTAFAYVGDARYNMGNSLLILGAKLGMDVRIGAPQSLWPSEGIIAAAHAAAKETGAKITLTENAHEAVKGVGFIHTDVWVSMGEPKEVWQERIDLLKDYRVTPELMAASGNPQVKFMHCLPAFHNRETKVGEWIYETFGLNGVEVTEEVFESPAGIVFDQAENRMHTIKAVMVAALGD.

Carbamoyl phosphate-binding positions include 55–58 (STRT), glutamine 82, arginine 106, and 133–136 (HPTQ). Residues asparagine 166, aspartate 230, and 234 to 235 (SM) each bind L-ornithine. Residues 272–273 (CL) and arginine 317 each bind carbamoyl phosphate.

It belongs to the aspartate/ornithine carbamoyltransferase superfamily. OTCase family.

The protein localises to the cytoplasm. The enzyme catalyses carbamoyl phosphate + L-ornithine = L-citrulline + phosphate + H(+). It participates in amino-acid biosynthesis; L-arginine biosynthesis; L-arginine from L-ornithine and carbamoyl phosphate: step 1/3. Reversibly catalyzes the transfer of the carbamoyl group from carbamoyl phosphate (CP) to the N(epsilon) atom of ornithine (ORN) to produce L-citrulline. This chain is Ornithine carbamoyltransferase (argF), found in Neisseria gonorrhoeae.